The chain runs to 99 residues: MTELAQLQASAEQAAALLKAMSHPKRLLILCMLSGSPGTSAGELTRITGLSASATSQHLARMRDEGLIDSQRDAQRILYSIKNEAVNAIIATLKNVYCP.

Positions 7–99 (LQASAEQAAA…IATLKNVYCP (93 aa)) constitute an HTH arsR-type domain. A DNA-binding region (H-T-H motif) is located at residues 41 to 64 (AGELTRITGLSASATSQHLARMRD).

Its activity is regulated as follows. In the presence of H(2)S, two cysteine residues form an intramolecular tetrasulfide bond, which attenuates the binding of YgaV to DNA. Both unmodified YgaV and sulfide-modified YgaV can probably function as either a repressor or an activator. Binds heme, which may influence the DNA-binding affinity. In terms of biological role, transcriptional regulator that regulates large-scale gene expression in response to sulfide. May act as a global regulator responsible for redox homeostasis. It functions as both a repressor and an activator. In the absence of sulfide compounds, it negatively regulates many anaerobic respiratory genes, including formate, fumarate, lactate, nitrate and nitrite reductase genes. In the presence of hydrogen sulfide (H(2)S), YgaV activity is attenuated, leading to the expression of anaerobic respiratory and ROS scavenging genes, which contributes to redox homeostasis, reactive oxygen species (ROS) scavenging and antibiotic tolerance. It responds to H(2)O(2) scavenging and increases antibiotic tolerance under H(2)S-atmospheric conditions. It also negatively regulates its own expression by binding to the ygaVP promoter region. May also be involved in regulatory mechanisms that operate independently of sulfide. This is HTH-type transcriptional regulator YgaV (ygaV) from Escherichia coli (strain K12).